Reading from the N-terminus, the 361-residue chain is Single-stranded DNA-binding protein 2 (361 aa).

Lys-6 bears the N6-acetyllysine mark. A LisH domain is found at 18–50; that stretch reads AREKLALYVYEYLLHVGAQKSAQTFLSEIRWEK. Disordered regions lie at residues 147 to 171 and 194 to 361; these read GGVP…HPNM and GAMR…TMSV. Over residues 204–219 the composition is skewed to gly residues; it reads GGPGMPGMNMGPGGGR. Positions 225–236 are enriched in polar residues; that stretch reads TNANSIPYSSAS. Residues 246–256 show a composition bias toward pro residues; sequence GGGPPGTPIMP. Gly residues predominate over residues 289-299; the sequence is GSDGPMGGLGG. Residues 317–332 show a composition bias toward polar residues; the sequence is ISKNSPNNMSLSNQPG. Ser-321 is modified (phosphoserine). Thr-333 bears the Phosphothreonine mark. The span at 346-361 shows a compositional bias: polar residues; the sequence is NPFQSESYSPSMTMSV.

As to expression, ubiquitous.

Its subcellular location is the nucleus. In Homo sapiens (Human), this protein is Single-stranded DNA-binding protein 2 (SSBP2).